The primary structure comprises 208 residues: Peptidyl-prolyl cis-trans isomerase FKBP13, chloroplastic (208 aa).

2 disulfide bridges follow: C84–C96 and C185–C190. The PPIase FKBP-type domain maps to 109–208 (GQLIKAHYVG…LFDIEYIGKA (100 aa)).

It belongs to the FKBP-type PPIase family. Interacts in vitro with LTO1. The precursor, but not the mature form of the protein, interacts with the Rieske protein. In terms of tissue distribution, expressed in stems, leaves and developing flower buds, but not in roots.

Its subcellular location is the plastid. The protein localises to the chloroplast thylakoid lumen. It carries out the reaction [protein]-peptidylproline (omega=180) = [protein]-peptidylproline (omega=0). Its activity is regulated as follows. PPIase activity is optimal in oxidized form (S-S) and minimal in reduced form (SH). Reduction of the oxidized form is mediated by thioredoxin (TRX-M). Its function is as follows. PPIases accelerate the folding of proteins. It catalyzes the cis-trans isomerization of proline imidic peptide bonds in oligopeptides. Responsive of the major PPIase activity in the chloroplast thylakoid lumen. Regulates the accumulation of Rieske protein, an essential component of the photosynthetic electron transport chain. The chain is Peptidyl-prolyl cis-trans isomerase FKBP13, chloroplastic from Arabidopsis thaliana (Mouse-ear cress).